We begin with the raw amino-acid sequence, 194 residues long: Translation machinery-associated protein 22 (194 aa).

The SUI1 domain occupies 102 to 173 (VQIKRVERNK…DVQEWLLELY (72 aa)).

It belongs to the DENR family. As to quaternary structure, interacts with the 40S ribosomal subunit.

It is found in the cytoplasm. The polypeptide is Translation machinery-associated protein 22 (tma22) (Neosartorya fischeri (strain ATCC 1020 / DSM 3700 / CBS 544.65 / FGSC A1164 / JCM 1740 / NRRL 181 / WB 181) (Aspergillus fischerianus)).